A 63-amino-acid polypeptide reads, in one-letter code: Small ribosomal subunit protein bS21 (63 aa).

Belongs to the bacterial ribosomal protein bS21 family.

The protein is Small ribosomal subunit protein bS21 of Porphyromonas gingivalis (strain ATCC BAA-308 / W83).